Here is a 610-residue protein sequence, read N- to C-terminus: Glutamine--fructose-6-phosphate aminotransferase [isomerizing] (610 aa).

The active-site Nucleophile; for GATase activity is the cysteine 2. One can recognise a Glutamine amidotransferase type-2 domain in the interval 2–218 (CGIVGAVAQR…EGDVAEITRR (217 aa)). 2 consecutive SIS domains span residues 286–426 (AVEI…QQNR) and 459–600 (LAPD…VDQP). The active-site For Fru-6P isomerization activity is the lysine 605.

As to quaternary structure, homodimer.

The protein resides in the cytoplasm. The enzyme catalyses D-fructose 6-phosphate + L-glutamine = D-glucosamine 6-phosphate + L-glutamate. In terms of biological role, catalyzes the first step in hexosamine metabolism, converting fructose-6P into glucosamine-6P using glutamine as a nitrogen source. The polypeptide is Glutamine--fructose-6-phosphate aminotransferase [isomerizing] (Aliivibrio fischeri (strain ATCC 700601 / ES114) (Vibrio fischeri)).